Reading from the N-terminus, the 393-residue chain is Lysine/ornithine decarboxylase (393 aa).

K51 carries the N6-(pyridoxal phosphate)lysine modification. The Proton donor; shared with dimeric partner role is filled by C323.

The protein belongs to the Orn/Lys/Arg decarboxylase class-II family. In terms of assembly, homodimer. The cofactor is pyridoxal 5'-phosphate.

It carries out the reaction L-lysine + H(+) = cadaverine + CO2. The enzyme catalyses L-ornithine + H(+) = putrescine + CO2. The protein operates within amine and polyamine biosynthesis; putrescine biosynthesis via L-ornithine pathway; putrescine from L-ornithine: step 1/1. Its activity is regulated as follows. Inhibited competitively by both alpha-difluoromethyllysine and alpha-difluoromethylornithine. Its function is as follows. Decarboxylates both L-lysine and L-ornithine with similar catalytic efficiency. This Selenomonas ruminantium protein is Lysine/ornithine decarboxylase (ldc).